Reading from the N-terminus, the 117-residue chain is UPF0295 protein GTNG_0491 (117 aa).

2 helical membrane-spanning segments follow: residues 12–32 (IRTF…LGLF) and 42–62 (LFMV…FWIG).

The protein belongs to the UPF0295 family.

It localises to the cell membrane. In Geobacillus thermodenitrificans (strain NG80-2), this protein is UPF0295 protein GTNG_0491.